We begin with the raw amino-acid sequence, 390 residues long: S-adenosylmethionine synthase 1 (390 aa).

Mg(2+) is bound at residue Glu-9. His-15 is an ATP binding site. Glu-43 is a binding site for K(+). The L-methionine site is built by Glu-56 and Gln-99. ATP contacts are provided by residues 167–169, 235–238, Asp-246, 252–253, Ala-269, Lys-273, and Lys-277; these read DGK, SGRF, and RK. Asp-246 is a binding site for L-methionine. L-methionine is bound at residue Lys-277.

This sequence belongs to the AdoMet synthase family. Homotetramer. Requires Mn(2+) as cofactor. The cofactor is Mg(2+). Co(2+) is required as a cofactor. K(+) serves as cofactor.

It localises to the cytoplasm. It carries out the reaction L-methionine + ATP + H2O = S-adenosyl-L-methionine + phosphate + diphosphate. The protein operates within amino-acid biosynthesis; S-adenosyl-L-methionine biosynthesis; S-adenosyl-L-methionine from L-methionine: step 1/1. Its function is as follows. Catalyzes the formation of S-adenosylmethionine from methionine and ATP. The reaction comprises two steps that are both catalyzed by the same enzyme: formation of S-adenosylmethionine (AdoMet) and triphosphate, and subsequent hydrolysis of the triphosphate. This is S-adenosylmethionine synthase 1 (SAMS1) from Nicotiana tabacum (Common tobacco).